A 416-amino-acid chain; its full sequence is Secreted RxLR effector protein 25 (416 aa).

The signal sequence occupies residues 1 to 20 (MRSWLLLLVGLSSYFALSTS). A RxLR-dEER motif is present at residues 49–88 (RKLRAPGGDTNTLKDSGKARREKKVWKLFCRVFLQLDDEK).

The protein belongs to the RxLR effector family.

It localises to the secreted. The protein resides in the host cytoplasm. The protein localises to the host nucleus. Effector that partially suppresses the tobacco programmed cell death induced by cell death-inducing proteins. The polypeptide is Secreted RxLR effector protein 25 (Plasmopara viticola (Downy mildew of grapevine)).